A 464-amino-acid chain; its full sequence is MNLRTIRAELQQFLQLAIPLAAAQVAQAAVGFVDTVMMGRLGPEPLAAGGLASALFQFILATASGVVMAVSPLVAEAQGAGKDYKIAAIARQGLWLSVLLGLPVMLIISQLARLMPVLGQSATTIALARDYWMAVLWGIIPGLGFAMLRGYVAALEQARIILPLVLFGTLVNGLGNYLLGYGQLGFPRLELTGLGLSSALGLWVMFLGLLAYTAWQPKLRRYPFWQDWRRLQPSICRQILQLGWAIAVTVAVEFGLFTIITILMGAIGVEALAAHQTVSQTIILIFMVPLGCSFAVTVRVGWWLGRQDGLGARRAGLVGVGAIALWMLLLAIPLALFPRAIVGIYVDLNNPVNAGLLNLALPMLRVASLALVLDGVQRVAMGALHGLQDTRIPLLLSLLAFWMVGVGSSAMLGFQLGWGSTGLWIGQSLGVAIAGGLFLQRFLKLTQNRTFKQRLQPQPLATHP.

12 consecutive transmembrane segments (helical) span residues 13–32 (FLQL…AVGF), 52–74 (ASAL…SPLV), 94–116 (LWLS…RLMP), 131–153 (YWMA…GYVA), 160–182 (IILP…LGYG), 192–214 (TGLG…AYTA), 244–266 (WAIA…LMGA), 281–303 (TIIL…VGWW), 315–337 (AGLV…LALF), 352–373 (VNAG…ALVL), 394–416 (LLLS…GFQL), and 421–443 (TGLW…QRFL).

This sequence belongs to the multi antimicrobial extrusion (MATE) (TC 2.A.66.1) family.

It localises to the cell inner membrane. Its function is as follows. Multidrug efflux pump. This Synechococcus sp. (strain ATCC 27144 / PCC 6301 / SAUG 1402/1) (Anacystis nidulans) protein is Probable multidrug resistance protein NorM (norM).